The primary structure comprises 177 residues: ATP synthase subunit delta (177 aa).

Belongs to the ATPase delta chain family. F-type ATPases have 2 components, F(1) - the catalytic core - and F(0) - the membrane proton channel. F(1) has five subunits: alpha(3), beta(3), gamma(1), delta(1), epsilon(1). F(0) has three main subunits: a(1), b(2) and c(10-14). The alpha and beta chains form an alternating ring which encloses part of the gamma chain. F(1) is attached to F(0) by a central stalk formed by the gamma and epsilon chains, while a peripheral stalk is formed by the delta and b chains.

Its subcellular location is the cell inner membrane. Its function is as follows. F(1)F(0) ATP synthase produces ATP from ADP in the presence of a proton or sodium gradient. F-type ATPases consist of two structural domains, F(1) containing the extramembraneous catalytic core and F(0) containing the membrane proton channel, linked together by a central stalk and a peripheral stalk. During catalysis, ATP synthesis in the catalytic domain of F(1) is coupled via a rotary mechanism of the central stalk subunits to proton translocation. This protein is part of the stalk that links CF(0) to CF(1). It either transmits conformational changes from CF(0) to CF(1) or is implicated in proton conduction. The protein is ATP synthase subunit delta of Shigella dysenteriae serotype 1 (strain Sd197).